The primary structure comprises 348 residues: Holliday junction branch migration complex subunit RuvB (348 aa).

The segment at 4-186 (TDRIISANTV…FGIIQRLEFY (183 aa)) is large ATPase domain (RuvB-L). ATP is bound by residues Ile-25, Arg-26, Gly-67, Lys-70, Thr-71, Thr-72, 133-135 (EDY), Arg-176, Tyr-186, and Arg-223. Thr-71 contacts Mg(2+). The segment at 187–257 (SVDDLAKIVY…IADKALTMLK (71 aa)) is small ATPAse domain (RuvB-S). The segment at 260–348 (PVGFDHMDHK…SSDQQQNLSL (89 aa)) is head domain (RuvB-H). DNA-binding residues include Arg-315 and Arg-320.

It belongs to the RuvB family. Homohexamer. Forms an RuvA(8)-RuvB(12)-Holliday junction (HJ) complex. HJ DNA is sandwiched between 2 RuvA tetramers; dsDNA enters through RuvA and exits via RuvB. An RuvB hexamer assembles on each DNA strand where it exits the tetramer. Each RuvB hexamer is contacted by two RuvA subunits (via domain III) on 2 adjacent RuvB subunits; this complex drives branch migration. In the full resolvosome a probable DNA-RuvA(4)-RuvB(12)-RuvC(2) complex forms which resolves the HJ.

The protein resides in the cytoplasm. The catalysed reaction is ATP + H2O = ADP + phosphate + H(+). The RuvA-RuvB-RuvC complex processes Holliday junction (HJ) DNA during genetic recombination and DNA repair, while the RuvA-RuvB complex plays an important role in the rescue of blocked DNA replication forks via replication fork reversal (RFR). RuvA specifically binds to HJ cruciform DNA, conferring on it an open structure. The RuvB hexamer acts as an ATP-dependent pump, pulling dsDNA into and through the RuvAB complex. RuvB forms 2 homohexamers on either side of HJ DNA bound by 1 or 2 RuvA tetramers; 4 subunits per hexamer contact DNA at a time. Coordinated motions by a converter formed by DNA-disengaged RuvB subunits stimulates ATP hydrolysis and nucleotide exchange. Immobilization of the converter enables RuvB to convert the ATP-contained energy into a lever motion, pulling 2 nucleotides of DNA out of the RuvA tetramer per ATP hydrolyzed, thus driving DNA branch migration. The RuvB motors rotate together with the DNA substrate, which together with the progressing nucleotide cycle form the mechanistic basis for DNA recombination by continuous HJ branch migration. Branch migration allows RuvC to scan DNA until it finds its consensus sequence, where it cleaves and resolves cruciform DNA. The protein is Holliday junction branch migration complex subunit RuvB of Francisella philomiragia subsp. philomiragia (strain ATCC 25017 / CCUG 19701 / FSC 153 / O#319-036).